A 124-amino-acid polypeptide reads, in one-letter code: S-adenosylmethionine decarboxylase proenzyme (124 aa).

The active-site Schiff-base intermediate with substrate; via pyruvic acid is the Ser-70. Ser-70 is subject to Pyruvic acid (Ser); by autocatalysis. His-75 (proton acceptor; for processing activity) is an active-site residue. Residue Cys-90 is the Proton donor; for catalytic activity of the active site.

This sequence belongs to the prokaryotic AdoMetDC family. Type 1 subfamily. As to quaternary structure, heterotetramer of two alpha and two beta chains arranged as a dimer of alpha/beta heterodimers. The cofactor is pyruvate. In terms of processing, is synthesized initially as an inactive proenzyme. Formation of the active enzyme involves a self-maturation process in which the active site pyruvoyl group is generated from an internal serine residue via an autocatalytic post-translational modification. Two non-identical subunits are generated from the proenzyme in this reaction, and the pyruvate is formed at the N-terminus of the alpha chain, which is derived from the carboxyl end of the proenzyme. The post-translation cleavage follows an unusual pathway, termed non-hydrolytic serinolysis, in which the side chain hydroxyl group of the serine supplies its oxygen atom to form the C-terminus of the beta chain, while the remainder of the serine residue undergoes an oxidative deamination to produce ammonia and the pyruvoyl group blocking the N-terminus of the alpha chain.

It catalyses the reaction S-adenosyl-L-methionine + H(+) = S-adenosyl 3-(methylsulfanyl)propylamine + CO2. Its pathway is amine and polyamine biosynthesis; S-adenosylmethioninamine biosynthesis; S-adenosylmethioninamine from S-adenosyl-L-methionine: step 1/1. Catalyzes the decarboxylation of S-adenosylmethionine to S-adenosylmethioninamine (dcAdoMet), the propylamine donor required for the synthesis of the polyamines spermine and spermidine from the diamine putrescine. The chain is S-adenosylmethionine decarboxylase proenzyme from Pyrobaculum neutrophilum (strain DSM 2338 / JCM 9278 / NBRC 100436 / V24Sta) (Thermoproteus neutrophilus).